The chain runs to 277 residues: Digeranylgeranylglyceryl phosphate synthase (277 aa).

8 helical membrane-spanning segments follow: residues 16 to 36 (ILAG…IPPV), 40 to 60 (ILIF…NDYF), 93 to 113 (FIGL…ALGA), 129 to 149 (FIGN…GAVG), 153 to 173 (IDLA…REIM), 199 to 218 (SGII…FLPV), 222 to 244 (IGLG…IDVL), and 253 to 273 (GQKI…LGAL).

Belongs to the UbiA prenyltransferase family. DGGGP synthase subfamily. The cofactor is Mg(2+).

Its subcellular location is the cell membrane. It carries out the reaction sn-3-O-(geranylgeranyl)glycerol 1-phosphate + (2E,6E,10E)-geranylgeranyl diphosphate = 2,3-bis-O-(geranylgeranyl)-sn-glycerol 1-phosphate + diphosphate. Its pathway is membrane lipid metabolism; glycerophospholipid metabolism. Its function is as follows. Prenyltransferase that catalyzes the transfer of the geranylgeranyl moiety of geranylgeranyl diphosphate (GGPP) to the C2 hydroxyl of (S)-3-O-geranylgeranylglyceryl phosphate (GGGP). This reaction is the second ether-bond-formation step in the biosynthesis of archaeal membrane lipids. In Pyrococcus horikoshii (strain ATCC 700860 / DSM 12428 / JCM 9974 / NBRC 100139 / OT-3), this protein is Digeranylgeranylglyceryl phosphate synthase.